Reading from the N-terminus, the 300-residue chain is Transcription initiation factor IIB 1 (300 aa).

A TFIIB-type zinc finger spans residues 3–34; it reads GKRVCPVCGSTEFIYDPSRGEIVCKVCGYVIE. Residues Cys-7, Cys-10, Cys-26, and Cys-29 each contribute to the Zn(2+) site. 2 consecutive repeat copies span residues 114 to 197 and 210 to 291.

The protein belongs to the TFIIB family.

Functionally, stabilizes TBP binding to an archaeal box-A promoter. Also responsible for recruiting RNA polymerase II to the pre-initiation complex (DNA-TBP-TFIIB). The polypeptide is Transcription initiation factor IIB 1 (Thermococcus kodakarensis (strain ATCC BAA-918 / JCM 12380 / KOD1) (Pyrococcus kodakaraensis (strain KOD1))).